We begin with the raw amino-acid sequence, 406 residues long: Isocitrate dehydrogenase [NADP] (406 aa).

Residues lysine 72, threonine 75, threonine 77, and arginine 82 each coordinate NADP(+). Positions 94, 96, 100, 110, and 132 each coordinate D-threo-isocitrate. 3 residues coordinate Mn(2+): aspartate 250, aspartate 273, and aspartate 277. NADP(+)-binding residues include glycine 308, threonine 309, valine 310, histidine 313, and asparagine 326.

It belongs to the isocitrate and isopropylmalate dehydrogenases family. As to quaternary structure, homodimer. Mg(2+) is required as a cofactor. The cofactor is Mn(2+).

It catalyses the reaction D-threo-isocitrate + NADP(+) = 2-oxoglutarate + CO2 + NADPH. Functionally, catalyzes the oxidative decarboxylation of isocitrate to 2-oxoglutarate and carbon dioxide with the concomitant reduction of NADP(+). The chain is Isocitrate dehydrogenase [NADP] (icd) from Sphingobium yanoikuyae (Sphingomonas yanoikuyae).